The primary structure comprises 141 residues: Large ribosomal subunit protein uL11 (141 aa).

The protein belongs to the universal ribosomal protein uL11 family. As to quaternary structure, part of the ribosomal stalk of the 50S ribosomal subunit. Interacts with L10 and the large rRNA to form the base of the stalk. L10 forms an elongated spine to which L12 dimers bind in a sequential fashion forming a multimeric L10(L12)X complex. One or more lysine residues are methylated.

In terms of biological role, forms part of the ribosomal stalk which helps the ribosome interact with GTP-bound translation factors. In Ligilactobacillus salivarius (strain UCC118) (Lactobacillus salivarius), this protein is Large ribosomal subunit protein uL11.